A 131-amino-acid chain; its full sequence is D-ribose pyranase (131 aa).

His20 (proton donor) is an active-site residue. Residues Asp28, His98, and 120-122 (YSN) each bind substrate.

It belongs to the RbsD / FucU family. RbsD subfamily. In terms of assembly, homodecamer.

The protein resides in the cytoplasm. The enzyme catalyses beta-D-ribopyranose = beta-D-ribofuranose. The protein operates within carbohydrate metabolism; D-ribose degradation; D-ribose 5-phosphate from beta-D-ribopyranose: step 1/2. Functionally, catalyzes the interconversion of beta-pyran and beta-furan forms of D-ribose. This is D-ribose pyranase from Lactobacillus gasseri (strain ATCC 33323 / DSM 20243 / BCRC 14619 / CIP 102991 / JCM 1131 / KCTC 3163 / NCIMB 11718 / NCTC 13722 / AM63).